Consider the following 1398-residue polypeptide: DNA-directed RNA polymerase subunit beta' (1398 aa).

Cysteine 71, cysteine 73, cysteine 86, and cysteine 89 together coordinate Zn(2+). 3 residues coordinate Mg(2+): aspartate 462, aspartate 464, and aspartate 466. Zn(2+) contacts are provided by cysteine 810, cysteine 883, cysteine 890, and cysteine 893. Positions 1377-1398 are disordered; the sequence is EKQAAVVSPAPEAELPALPPAE. A compositionally biased stretch (low complexity) spans 1380–1392; sequence AAVVSPAPEAELP.

It belongs to the RNA polymerase beta' chain family. In terms of assembly, the RNAP catalytic core consists of 2 alpha, 1 beta, 1 beta' and 1 omega subunit. When a sigma factor is associated with the core the holoenzyme is formed, which can initiate transcription. Mg(2+) is required as a cofactor. The cofactor is Zn(2+).

It carries out the reaction RNA(n) + a ribonucleoside 5'-triphosphate = RNA(n+1) + diphosphate. Functionally, DNA-dependent RNA polymerase catalyzes the transcription of DNA into RNA using the four ribonucleoside triphosphates as substrates. The chain is DNA-directed RNA polymerase subunit beta' from Bradyrhizobium diazoefficiens (strain JCM 10833 / BCRC 13528 / IAM 13628 / NBRC 14792 / USDA 110).